The chain runs to 346 residues: tRNA N6-adenosine threonylcarbamoyltransferase (346 aa).

2 residues coordinate Fe cation: H111 and H115. Substrate is bound by residues 134–138, D167, G180, and N279; that span reads LVSGG. Residue D307 coordinates Fe cation.

This sequence belongs to the KAE1 / TsaD family. The cofactor is Fe(2+).

Its subcellular location is the cytoplasm. The catalysed reaction is L-threonylcarbamoyladenylate + adenosine(37) in tRNA = N(6)-L-threonylcarbamoyladenosine(37) in tRNA + AMP + H(+). Required for the formation of a threonylcarbamoyl group on adenosine at position 37 (t(6)A37) in tRNAs that read codons beginning with adenine. Is involved in the transfer of the threonylcarbamoyl moiety of threonylcarbamoyl-AMP (TC-AMP) to the N6 group of A37, together with TsaE and TsaB. TsaD likely plays a direct catalytic role in this reaction. This is tRNA N6-adenosine threonylcarbamoyltransferase from Burkholderia cenocepacia (strain HI2424).